Consider the following 395-residue polypeptide: Flap endonuclease 1 (395 aa).

Positions 1-108 are N-domain; that stretch reads MGILGLSKLL…DELEMRRQKA (108 aa). Asp-34 provides a ligand contact to Mg(2+). Arg-74 contributes to the DNA binding site. Asp-90 lines the Mg(2+) pocket. The disordered stretch occupies residues 116 to 136; that stretch reads EKAKDAGDDEMMEKMSKRTVR. The segment at 126–257 is I-domain; the sequence is MMEKMSKRTV…QKAWEGIQRY (132 aa). Positions 162, 164, 183, and 185 each coordinate Mg(2+). Residue Glu-162 participates in DNA binding. Positions 235 and 237 each coordinate DNA. Asp-237 lines the Mg(2+) pocket. An interaction with PCNA region spans residues 340–348; sequence TQGRLDSFF.

This sequence belongs to the XPG/RAD2 endonuclease family. FEN1 subfamily. Interacts with PCNA. Three molecules of FEN1 bind to one PCNA trimer with each molecule binding to one PCNA monomer. PCNA stimulates the nuclease activity without altering cleavage specificity. Mg(2+) is required as a cofactor. Post-translationally, phosphorylated. Phosphorylation upon DNA damage induces relocalization to the nuclear plasma.

The protein localises to the nucleus. The protein resides in the nucleolus. It is found in the nucleoplasm. Its subcellular location is the mitochondrion. Structure-specific nuclease with 5'-flap endonuclease and 5'-3' exonuclease activities involved in DNA replication and repair. During DNA replication, cleaves the 5'-overhanging flap structure that is generated by displacement synthesis when DNA polymerase encounters the 5'-end of a downstream Okazaki fragment. It enters the flap from the 5'-end and then tracks to cleave the flap base, leaving a nick for ligation. Also involved in the long patch base excision repair (LP-BER) pathway, by cleaving within the apurinic/apyrimidinic (AP) site-terminated flap. Acts as a genome stabilization factor that prevents flaps from equilibrating into structures that lead to duplications and deletions. Also possesses 5'-3' exonuclease activity on nicked or gapped double-stranded DNA, and exhibits RNase H activity. Also involved in replication and repair of rDNA and in repairing mitochondrial DNA. This is Flap endonuclease 1 from Leishmania major.